Consider the following 194-residue polypeptide: ATP-dependent Clp protease proteolytic subunit (194 aa).

The Nucleophile role is filled by serine 98. Residue histidine 123 is part of the active site.

The protein belongs to the peptidase S14 family. As to quaternary structure, fourteen ClpP subunits assemble into 2 heptameric rings which stack back to back to give a disk-like structure with a central cavity, resembling the structure of eukaryotic proteasomes.

It localises to the cytoplasm. It carries out the reaction Hydrolysis of proteins to small peptides in the presence of ATP and magnesium. alpha-casein is the usual test substrate. In the absence of ATP, only oligopeptides shorter than five residues are hydrolyzed (such as succinyl-Leu-Tyr-|-NHMec, and Leu-Tyr-Leu-|-Tyr-Trp, in which cleavage of the -Tyr-|-Leu- and -Tyr-|-Trp bonds also occurs).. Cleaves peptides in various proteins in a process that requires ATP hydrolysis. Has a chymotrypsin-like activity. Plays a major role in the degradation of misfolded proteins. This chain is ATP-dependent Clp protease proteolytic subunit, found in Ruminiclostridium cellulolyticum (strain ATCC 35319 / DSM 5812 / JCM 6584 / H10) (Clostridium cellulolyticum).